The sequence spans 327 residues: tRNA N6-adenosine threonylcarbamoyltransferase (327 aa).

His109 and His113 together coordinate Fe cation. Substrate-binding positions include 132–136, Asp165, Gly178, Asp182, and Asn268; that span reads MVSGG. Fe cation is bound at residue Asp296.

This sequence belongs to the KAE1 / TsaD family. The cofactor is Fe(2+).

The protein localises to the cytoplasm. The catalysed reaction is L-threonylcarbamoyladenylate + adenosine(37) in tRNA = N(6)-L-threonylcarbamoyladenosine(37) in tRNA + AMP + H(+). In terms of biological role, required for the formation of a threonylcarbamoyl group on adenosine at position 37 (t(6)A37) in tRNAs that read codons beginning with adenine. Is involved in the transfer of the threonylcarbamoyl moiety of threonylcarbamoyl-AMP (TC-AMP) to the N6 group of A37, together with TsaE and TsaB. TsaD likely plays a direct catalytic role in this reaction. The protein is tRNA N6-adenosine threonylcarbamoyltransferase of Thermotoga petrophila (strain ATCC BAA-488 / DSM 13995 / JCM 10881 / RKU-1).